The chain runs to 419 residues: Tol-Pal system protein TolB (419 aa).

The signal sequence occupies residues 1 to 17 (MRFIGLVLLLLSVKLFG).

Belongs to the TolB family. In terms of assembly, the Tol-Pal system is composed of five core proteins: the inner membrane proteins TolA, TolQ and TolR, the periplasmic protein TolB and the outer membrane protein Pal. They form a network linking the inner and outer membranes and the peptidoglycan layer.

It is found in the periplasm. Part of the Tol-Pal system, which plays a role in outer membrane invagination during cell division and is important for maintaining outer membrane integrity. The chain is Tol-Pal system protein TolB from Helicobacter hepaticus (strain ATCC 51449 / 3B1).